A 415-amino-acid polypeptide reads, in one-letter code: MSDYNYKPTLWTRADALKVHEDDPTTTQPVIDIAFPVMSEEVFIWDTMPLRDFDGEIISVNGWCIIFTLTADRNTDNPQFQDENGNYDITRDWEDRHGRARICYWYSRTGKDWIFGGRVMAEGVAPTTREWAGTPILLNDRGDIDLYYTCVTPGATIAKVRGKIVTSDQSVSLEGFQQVTSLFSADGTIYQTEEQNAFWNFRDPSPFIDRNDGKLYMLFEGNVAGPRGSHEITQAEMGNVPPGYEDVGGAKYQAGCVGLAVAKDLSGSEWQILPPLITAVGVNDQTERPHFVFQDGKYYLFTISHKYTFADNLTGPDGVYGFVSDKLTGPYTPMNSSGLVLGNPSSQPFQTYSHYVMPNGLVTSFIDSVPWKGKDYRIGGTEAPTVKILLKGDRSFIVDSFDYGYIPAMKDITLK.

Positions 45, 46, 132, 202, and 203 each coordinate sucrose. Asp-46 acts as the Nucleophile in catalysis. Glu-287 (proton donor/acceptor) is an active-site residue.

It belongs to the glycosyl hydrolase 68 family.

It localises to the secreted. The enzyme catalyses [6)-beta-D-fructofuranosyl-(2-&gt;](n) alpha-D-glucopyranoside + sucrose = [6)-beta-D-fructofuranosyl-(2-&gt;](n+1) alpha-D-glucopyranoside + D-glucose. Functionally, catalyzes the synthesis of levan, a fructose polymer, by transferring the fructosyl moiety from sucrose to a growing acceptor molecule. The protein is Levansucrase of Erwinia amylovora (Fire blight bacteria).